The chain runs to 173 residues: Inosine/xanthosine triphosphatase (173 aa).

8–13 (TTNPAK) is a binding site for substrate. Residues Glu-38 and Glu-68 each contribute to the Mg(2+) site. 68-69 (EA) is a substrate binding site.

It belongs to the YjjX NTPase family. Homodimer. It depends on Mg(2+) as a cofactor. Requires Mn(2+) as cofactor.

The enzyme catalyses XTP + H2O = XDP + phosphate + H(+). It catalyses the reaction ITP + H2O = IDP + phosphate + H(+). In terms of biological role, phosphatase that hydrolyzes non-canonical purine nucleotides such as XTP and ITP to their respective diphosphate derivatives. Probably excludes non-canonical purines from DNA/RNA precursor pool, thus preventing their incorporation into DNA/RNA and avoiding chromosomal lesions. The sequence is that of Inosine/xanthosine triphosphatase (yjjX) from Escherichia coli (strain ATCC 8739 / DSM 1576 / NBRC 3972 / NCIMB 8545 / WDCM 00012 / Crooks).